A 107-amino-acid polypeptide reads, in one-letter code: Large ribosomal subunit protein uL24 (107 aa).

This sequence belongs to the universal ribosomal protein uL24 family. In terms of assembly, part of the 50S ribosomal subunit.

Functionally, one of two assembly initiator proteins, it binds directly to the 5'-end of the 23S rRNA, where it nucleates assembly of the 50S subunit. Its function is as follows. One of the proteins that surrounds the polypeptide exit tunnel on the outside of the subunit. The sequence is that of Large ribosomal subunit protein uL24 from Pelotomaculum thermopropionicum (strain DSM 13744 / JCM 10971 / SI).